A 177-amino-acid polypeptide reads, in one-letter code: Large ribosomal subunit protein uL6 (177 aa).

The protein belongs to the universal ribosomal protein uL6 family. In terms of assembly, part of the 50S ribosomal subunit.

In terms of biological role, this protein binds to the 23S rRNA, and is important in its secondary structure. It is located near the subunit interface in the base of the L7/L12 stalk, and near the tRNA binding site of the peptidyltransferase center. This is Large ribosomal subunit protein uL6 from Rhizobium johnstonii (strain DSM 114642 / LMG 32736 / 3841) (Rhizobium leguminosarum bv. viciae).